Consider the following 149-residue polypeptide: MTSRYAKRLQKELLDLKTNPPPCISITEGDNLDKWVIAVDGTEGSIYQGEHFKLQFKFSSGYPLDSPEVIFIGTPPIHPHIYSNGHICLSILYDNWSPALTVSSVCLSILSMLSGCTEKIRPTDDSKYVSRVLNKSPKEVRWMFHDDTV.

One can recognise a UBC core domain in the interval 4–149; that stretch reads RYAKRLQKEL…VRWMFHDDTV (146 aa). C88 acts as the Glycyl thioester intermediate in catalysis.

This sequence belongs to the ubiquitin-conjugating enzyme family.

It carries out the reaction S-ubiquitinyl-[E1 ubiquitin-activating enzyme]-L-cysteine + [E2 ubiquitin-conjugating enzyme]-L-cysteine = [E1 ubiquitin-activating enzyme]-L-cysteine + S-ubiquitinyl-[E2 ubiquitin-conjugating enzyme]-L-cysteine.. It catalyses the reaction S-ubiquitinyl-[E1 ubiquitin-activating enzyme]-L-cysteine + [acceptor protein]-N-terminal-amino acid = [E1 ubiquitin-activating enzyme]-L-cysteine + N-terminal-ubiquitinyl-[acceptor protein].. Its pathway is protein modification; protein ubiquitination. Functionally, catalyzes the covalent attachment of ubiquitin to other proteins. The polypeptide is Probable ubiquitin-conjugating enzyme E2 W (ube2w) (Dictyostelium discoideum (Social amoeba)).